The sequence spans 223 residues: Sigma non-opioid intracellular receptor 1 (223 aa).

At 1 to 9 (MPWAVGRRW) the chain is on the lumenal side. The interval 2–8 (PWAVGRR) is targeting to endoplasmic reticulum-associated lipid droplets. A helical membrane pass occupies residues 10-30 (AWITLFLTIVAVLIQAVWLWL). The Cytoplasmic segment spans residues 31 to 223 (GTQSFVFQRE…LTTYLFGQDP (193 aa)). The segment at 99–106 (SLSEYVLL) is important for ligand-binding. Positions 177–223 (VIPSTLAFALSDTIFSTQDFLTLFYTLRAYARGLRLELTTYLFGQDP) are C-terminal hydrophobic region.

It belongs to the ERG2 family. In terms of assembly, homotrimer. Interacts with KCNA2; cocaine consumption leads to increased interaction. Forms a ternary complex with ANK2 and ITPR3. The complex is disrupted by agonists. Interacts with KCNA4. Interacts with RNF112 in an oxidative stress-regulated manner. As to expression, expressed in ependymocytes and neurons throughout the CNS from the olfactory bulb to the spinal cord. Expressed by progenitor, mature and satellite oligodendrocytes and by Schwann cells (at protein level). Expressed in liver, intestine, kidney, brain, lung and heart. Expressed by retinal cells.

It localises to the nucleus inner membrane. It is found in the nucleus outer membrane. Its subcellular location is the nucleus envelope. The protein resides in the cytoplasmic vesicle. The protein localises to the endoplasmic reticulum membrane. It localises to the membrane. It is found in the lipid droplet. Its subcellular location is the cell junction. The protein resides in the cell membrane. The protein localises to the cell projection. It localises to the growth cone. It is found in the postsynaptic density membrane. Functions in lipid transport from the endoplasmic reticulum and is involved in a wide array of cellular functions probably through regulation of the biogenesis of lipid microdomains at the plasma membrane. Involved in the regulation of different receptors it plays a role in BDNF signaling and EGF signaling. Also regulates ion channels like the potassium channel and could modulate neurotransmitter release. Plays a role in calcium signaling through modulation together with ANK2 of the ITP3R-dependent calcium efflux at the endoplasmic reticulum. Plays a role in several other cell functions including proliferation, survival and death. Originally identified for its ability to bind various psychoactive drugs it is involved in learning processes, memory and mood alteration. Necessary for proper mitochondrial axonal transport in motor neurons, in particular the retrograde movement of mitochondria. Plays a role in protecting cells against oxidative stress-induced cell death via its interaction with RNF112. The chain is Sigma non-opioid intracellular receptor 1 (Sigmar1) from Rattus norvegicus (Rat).